The primary structure comprises 443 residues: Porin D (443 aa).

An N-terminal signal peptide occupies residues 1–23 (MKVMKWSAIALAVSAGSTQFAVA). Active-site residues include H179, D231, and S319.

This sequence belongs to the outer membrane porin (Opr) (TC 1.B.25) family.

The protein localises to the cell outer membrane. Its function is as follows. Porin with a specificity for basic amino acids. Involved in facilitated diffusion of carbapenem beta-lactam antibiotics, such as imipenem and meropenem. Also possesses serine protease activity. The polypeptide is Porin D (oprD) (Pseudomonas aeruginosa (strain ATCC 15692 / DSM 22644 / CIP 104116 / JCM 14847 / LMG 12228 / 1C / PRS 101 / PAO1)).